A 254-amino-acid polypeptide reads, in one-letter code: Protein GVQW3 (254 aa).

The chain is Protein GVQW3 from Homo sapiens (Human).